The sequence spans 234 residues: Uridylate kinase (234 aa).

Residue 9-12 coordinates ATP; that stretch reads KLSG. Residue G51 participates in UMP binding. Residues G52 and R56 each contribute to the ATP site. UMP is bound by residues D71 and 132–139; that span reads CGNPFFTT. Positions 159, 165, and 168 each coordinate ATP.

This sequence belongs to the UMP kinase family. As to quaternary structure, homohexamer.

The protein resides in the cytoplasm. The enzyme catalyses UMP + ATP = UDP + ADP. The protein operates within pyrimidine metabolism; CTP biosynthesis via de novo pathway; UDP from UMP (UMPK route): step 1/1. Its activity is regulated as follows. Inhibited by UTP. Catalyzes the reversible phosphorylation of UMP to UDP. The chain is Uridylate kinase from Prochlorococcus marinus subsp. pastoris (strain CCMP1986 / NIES-2087 / MED4).